The following is a 381-amino-acid chain: uncharacterized protein (381 aa).

The next 11 membrane-spanning stretches (helical) occupy residues 10–29 (IFFS…INFY), 75–93 (IILI…LIIL), 98–117 (LIKI…FTSR), 130–147 (YLFL…NLMV), 157–179 (TNNT…FLHY), 199–221 (IELQ…WYYE), 236–255 (LILK…ICYI), 262–284 (YFAN…IHGT), 289–311 (NILY…ILIL), 323–340 (ALLS…AGAL), and 355–374 (LFSV…WYFI).

It localises to the cell membrane. This is an uncharacterized protein from Rickettsia prowazekii (strain Madrid E).